The primary structure comprises 235 residues: Thaumatin I (235 aa).

An N-terminal signal peptide occupies residues 1–22 (MAATTCFFFLFPFLLLLTLSRA). 8 disulfide bridges follow: Cys-31–Cys-226, Cys-78–Cys-88, Cys-93–Cys-99, Cys-143–Cys-215, Cys-148–Cys-199, Cys-156–Cys-167, Cys-171–Cys-180, and Cys-181–Cys-186. Residues 230–235 (LELEDE) constitute a propeptide, removed in mature form.

This sequence belongs to the thaumatin family.

The protein localises to the cytoplasmic vesicle. In terms of biological role, taste-modifying protein; intensely sweet-tasting. It is 100000 times sweeter than sucrose on a molar basis. This chain is Thaumatin I, found in Thaumatococcus daniellii (Katemfe).